The sequence spans 29 residues: Cyclotide psyleio B (29 aa).

The segment at residues 1-29 (GDLPICGETCFGGTCNTPGCVCAWPVCNR) is a cross-link (cyclopeptide (Gly-Arg)). Cystine bridges form between Cys6–Cys20, Cys10–Cys22, and Cys15–Cys27.

Post-translationally, this is a cyclic peptide.

In terms of biological role, probably participates in a plant defense mechanism. The sequence is that of Cyclotide psyleio B from Psychotria brachyceras.